The chain runs to 798 residues: Copalyl diphosphate synthase 1, chloroplastic (798 aa).

The N-terminal 72 residues, 1–72 (MASLSTMHLI…SKVAGINRVA (72 aa)), are a transit peptide targeting the chloroplast. Lys251 is a binding site for substrate. 2 residues coordinate Mg(2+): Asp383 and Asp385. A DXDD motif motif is present at residues 383–386 (DIDD). Lys469 serves as a coordination point for substrate.

This sequence belongs to the terpene synthase family. Tpsc subfamily. It depends on Mg(2+) as a cofactor. In terms of tissue distribution, highly expressed in roots, and, at low levels, in stems and leaves.

It is found in the plastid. The protein resides in the chloroplast. The enzyme catalyses (2E,6E,10E)-geranylgeranyl diphosphate = (+)-copalyl diphosphate. It functions in the pathway secondary metabolite biosynthesis; terpenoid biosynthesis. In terms of biological role, involved in the biosynthesis of ent-kaurene diterpenoids natural products such as oridonin, miltiradiene, eriocalyxin B and nezukol, known to exhibit antitumor, anti-inflammatory and antibacterial activities. Catalyzes the conversion of (2E,6E,10E)-geranylgeranyl diphosphate (GGPP) to (+)-copalyl diphosphate ((+)-CPP). This chain is Copalyl diphosphate synthase 1, chloroplastic, found in Isodon rubescens (Rabdosia rubescens).